A 307-amino-acid polypeptide reads, in one-letter code: Ribonuclease Z (307 aa).

Residues His63, His65, Asp67, His68, His141, Asp212, and His270 each coordinate Zn(2+). The active-site Proton acceptor is Asp67.

It belongs to the RNase Z family. As to quaternary structure, homodimer. Zn(2+) is required as a cofactor.

It catalyses the reaction Endonucleolytic cleavage of RNA, removing extra 3' nucleotides from tRNA precursor, generating 3' termini of tRNAs. A 3'-hydroxy group is left at the tRNA terminus and a 5'-phosphoryl group is left at the trailer molecule.. Its function is as follows. Zinc phosphodiesterase, which displays some tRNA 3'-processing endonuclease activity. Probably involved in tRNA maturation, by removing a 3'-trailer from precursor tRNA. This Bacillus cereus (strain ZK / E33L) protein is Ribonuclease Z.